The sequence spans 447 residues: Phosphoglucosamine mutase (447 aa).

Ser105 serves as the catalytic Phosphoserine intermediate. Mg(2+)-binding residues include Ser105, Asp244, Asp246, and Asp248. Ser105 is subject to Phosphoserine.

This sequence belongs to the phosphohexose mutase family. Requires Mg(2+) as cofactor. In terms of processing, activated by phosphorylation.

The enzyme catalyses alpha-D-glucosamine 1-phosphate = D-glucosamine 6-phosphate. Catalyzes the conversion of glucosamine-6-phosphate to glucosamine-1-phosphate. This Polynucleobacter asymbioticus (strain DSM 18221 / CIP 109841 / QLW-P1DMWA-1) (Polynucleobacter necessarius subsp. asymbioticus) protein is Phosphoglucosamine mutase.